The primary structure comprises 837 residues: Cap-specific mRNA (nucleoside-2'-O-)-methyltransferase 1 (837 aa).

Residues 1-66 (MKRRTDPECT…EGKQPCSDDF (66 aa)) form a disordered region. The short motif at 2-18 (KRRTDPECTAPLKKQKR) is the Bipartite nuclear localization signal element. Phosphoserine is present on residues S27, S30, and S52. Over residues 56–66 (TEGKQPCSDDF) the composition is skewed to basic and acidic residues. Residues 86–132 (YNSVSQRLMAKMGFREGEGLGKYSQGRKDIVETSNQKGRRGLGLTLQ) enclose the G-patch domain. S90 is modified (phosphoserine). Residue K107 is modified to N6-acetyllysine. Substrate contacts are provided by residues 202–206 (KSVFD) and R217. The 220-residue stretch at 230-449 (FFLNRAAMKM…ERYVVCKGLK (220 aa)) folds into the RrmJ-type SAM-dependent 2'-O-MTase domain. N233 provides a ligand contact to S-adenosyl-L-methionine. Residue K238 is part of the active site. S-adenosyl-L-methionine is bound by residues 276–282 (CAGPGGF) and 334–335 (DI). D363 is an active-site residue. 373 to 375 (NLQ) contributes to the substrate binding site. The active-site Proton acceptor is the K403. N438 contacts substrate. The tract at residues 726–834 (SGGTPKLSYT…VLSFIQSHNP (109 aa)) is interaction with POLR2A. The 35-residue stretch at 751–785 (RTVNEPWTMGFSKSNNRKFFYNKKTQKSVYALPTE) folds into the WW domain.

In terms of assembly, interacts with POLR2A (via C-terminus).

The protein resides in the nucleus. It carries out the reaction a 5'-end (N(7)-methyl 5'-triphosphoguanosine)-ribonucleoside in mRNA + S-adenosyl-L-methionine = a 5'-end (N(7)-methyl 5'-triphosphoguanosine)-(2'-O-methyl-ribonucleoside) in mRNA + S-adenosyl-L-homocysteine + H(+). In terms of biological role, S-adenosyl-L-methionine-dependent methyltransferase that mediates mRNA cap1 2'-O-ribose methylation to the 5'-cap structure of mRNAs. Methylates the ribose of the first nucleotide of a m(7)GpppG-capped mRNA and small nuclear RNA (snRNA) to produce m(7)GpppRm (cap1). Displays a preference for cap0 transcripts. Cap1 modification is linked to higher levels of translation. May be involved in the interferon response pathway. This Mus musculus (Mouse) protein is Cap-specific mRNA (nucleoside-2'-O-)-methyltransferase 1 (Cmtr1).